The chain runs to 98 residues: Small ribosomal subunit protein bS20 (98 aa).

Belongs to the bacterial ribosomal protein bS20 family.

Functionally, binds directly to 16S ribosomal RNA. The polypeptide is Small ribosomal subunit protein bS20 (Kosmotoga olearia (strain ATCC BAA-1733 / DSM 21960 / TBF 19.5.1)).